The following is a 68-amino-acid chain: Small integral membrane protein 10-like protein 1 (68 aa).

The disordered stretch occupies residues 1-21 (MAPAAAPSSLAVRASSPAATP).

The chain is Small integral membrane protein 10-like protein 1 from Homo sapiens (Human).